A 325-amino-acid chain; its full sequence is Probable cell division protein WhiA (325 aa).

The H-T-H motif DNA-binding region spans 273–306; it reads SLEELGALADPPLTKDAVAGRIRRLLALADKRAN.

This sequence belongs to the WhiA family.

Its function is as follows. Involved in cell division and chromosome segregation. The sequence is that of Probable cell division protein WhiA from Parafrankia sp. (strain EAN1pec).